A 58-amino-acid chain; its full sequence is UPF0391 membrane protein Sden_3712 (58 aa).

2 consecutive transmembrane segments (helical) span residues 6–26 (LTFL…IAGA) and 27–47 (AAGI…ISLV).

It belongs to the UPF0391 family.

Its subcellular location is the cell membrane. In Shewanella denitrificans (strain OS217 / ATCC BAA-1090 / DSM 15013), this protein is UPF0391 membrane protein Sden_3712.